The following is a 1802-amino-acid chain: U3 small nucleolar RNA-associated protein 10 (1802 aa).

The HEAT 1 repeat unit spans residues 581–618 (MDLQALLPFVLVTLADPSERVRREAAGILTIIGSLHKN). A run of 2 helical transmembrane segments spans residues 946 to 966 (VQSGMSYLLSLALGSLLAIVN) and 1002 to 1022 (ALLLVAGLSVIAPELVLHSVM). HEAT repeat units follow at residues 1046–1083 (QTIDQVVPALIQSLRNQKRDVVSGTSELLLSFTAAFEH), 1253–1290 (LSLVDFLDTIEVLLQRPNDELRRKVLRLLEGRLRQNPE), 1297–1335 (TRMLDFLSVLVKIVESSPDILLKHAAVACIDRIADKYGK), and 1758–1795 (ALLPEMLPYISELMEDEDENVEKEVRKWVKQIEDVLGE).

The protein belongs to the HEATR1/UTP10 family. Component of the ribosomal small subunit (SSU) processome.

It localises to the nucleus. It is found in the nucleolus. The protein localises to the membrane. In terms of biological role, involved in nucleolar processing of pre-18S ribosomal RNA. Involved in ribosome biosynthesis. This is U3 small nucleolar RNA-associated protein 10 from Aspergillus oryzae (strain ATCC 42149 / RIB 40) (Yellow koji mold).